A 176-amino-acid polypeptide reads, in one-letter code: RNA pyrophosphohydrolase (176 aa).

The Nudix hydrolase domain maps to 6-149 (GYRPNVGIVI…KRDVYRRVMK (144 aa)). Residues 38 to 59 (GGINPGESPEQAMYRELYEEVG) carry the Nudix box motif.

Belongs to the Nudix hydrolase family. RppH subfamily. The cofactor is a divalent metal cation.

Functionally, accelerates the degradation of transcripts by removing pyrophosphate from the 5'-end of triphosphorylated RNA, leading to a more labile monophosphorylated state that can stimulate subsequent ribonuclease cleavage. In Photorhabdus laumondii subsp. laumondii (strain DSM 15139 / CIP 105565 / TT01) (Photorhabdus luminescens subsp. laumondii), this protein is RNA pyrophosphohydrolase.